Reading from the N-terminus, the 518-residue chain is Zinc finger protein 449 (518 aa).

Positions arginine 30 to leucine 112 constitute an SCAN box domain. The span at asparagine 292 to leucine 304 shows a compositional bias: polar residues. Residues asparagine 292–cysteine 325 form a disordered region. C2H2-type zinc fingers lie at residues histidine 323 to histidine 345, histidine 351 to histidine 373, tyrosine 379 to histidine 401, tyrosine 407 to histidine 429, histidine 435 to histidine 457, phenylalanine 463 to histidine 485, and tyrosine 491 to histidine 513.

Belongs to the krueppel C2H2-type zinc-finger protein family.

It is found in the nucleus. In terms of biological role, may be involved in transcriptional regulation. The polypeptide is Zinc finger protein 449 (ZNF449) (Homo sapiens (Human)).